A 58-amino-acid polypeptide reads, in one-letter code: Birtoxin (58 aa).

The region spanning 3-58 (VPGNYPLDKDGNTYKCFLLGGNEECLNVCKLHGVQYGYCYASKCWCEYLEDDKDSV) is the LCN-type CS-alpha/beta domain. 3 cysteine pairs are disulfide-bonded: Cys-18/Cys-41, Cys-27/Cys-46, and Cys-31/Cys-48.

Expressed by the venom gland.

It localises to the secreted. Beta toxins bind voltage-independently at site-4 of sodium channels (Nav) and shift the voltage of activation toward more negative potentials thereby affecting sodium channel activation and promoting spontaneous and repetitive firing. Moderately toxic, but very high abundant. Does not target reptilian channels. Does not produce effect when administered to blowfly and cabbage looper larvae. In mice, produces convulsions, tremors, increased ventilation and, subsequently, death. The protein is Birtoxin of Parabuthus transvaalicus (Transvaal thick-tailed scorpion).